Consider the following 215-residue polypeptide: E3 ubiquitin-protein ligase NleG (215 aa).

The interval 136–189 is RING/U-box domain; sequence CPITLCIPETGVFVRNAKNSEICSLYDHNALTELIRRNAPHPLSREPFVPEMIV. The PDZ-binding motif motif lies at 213 to 215; sequence TRI.

This sequence belongs to the NleG E3 ligase family. Interacts with host GOPC (human protein). Two sizes of protein are detected upon expression in C.rodentium; only the smaller protein is secreted.

It localises to the secreted. The protein resides in the host cytoplasm. It catalyses the reaction S-ubiquitinyl-[E2 ubiquitin-conjugating enzyme]-L-cysteine + [acceptor protein]-L-lysine = [E2 ubiquitin-conjugating enzyme]-L-cysteine + N(6)-ubiquitinyl-[acceptor protein]-L-lysine.. Its function is as follows. Effector proteins function to alter host cell physiology and promote bacterial survival in host tissues. This protein is an E3 ubiquitin-protein ligase that probably interferes with the host's ubiquitination pathway and targets host proteins for proteasomal degradation. Can ubiquitinate ubiquitin, giving rise to polyubiquitin chains (in vitro). Does not complement an nleG8 deletion in C.rodentium. This is E3 ubiquitin-protein ligase NleG from Escherichia coli O157:H7.